Reading from the N-terminus, the 368-residue chain is Phospho-N-acetylmuramoyl-pentapeptide-transferase (368 aa).

Transmembrane regions (helical) follow at residues Tyr-23–Gly-43, Ile-72–Ala-92, Ile-94–Phe-114, Val-139–Leu-159, Ile-170–Ser-190, Gly-201–Thr-221, Ala-238–Phe-258, Val-265–Ile-286, and Lys-345–Leu-365.

The protein belongs to the glycosyltransferase 4 family. MraY subfamily. Mg(2+) is required as a cofactor.

It localises to the cell inner membrane. The enzyme catalyses UDP-N-acetyl-alpha-D-muramoyl-L-alanyl-gamma-D-glutamyl-meso-2,6-diaminopimeloyl-D-alanyl-D-alanine + di-trans,octa-cis-undecaprenyl phosphate = di-trans,octa-cis-undecaprenyl diphospho-N-acetyl-alpha-D-muramoyl-L-alanyl-D-glutamyl-meso-2,6-diaminopimeloyl-D-alanyl-D-alanine + UMP. The protein operates within cell wall biogenesis; peptidoglycan biosynthesis. In terms of biological role, catalyzes the initial step of the lipid cycle reactions in the biosynthesis of the cell wall peptidoglycan: transfers peptidoglycan precursor phospho-MurNAc-pentapeptide from UDP-MurNAc-pentapeptide onto the lipid carrier undecaprenyl phosphate, yielding undecaprenyl-pyrophosphoryl-MurNAc-pentapeptide, known as lipid I. This chain is Phospho-N-acetylmuramoyl-pentapeptide-transferase, found in Chloroherpeton thalassium (strain ATCC 35110 / GB-78).